Consider the following 263-residue polypeptide: Purine nucleoside phosphorylase SAV1187 (263 aa).

Residues His79, Cys124, and His141 each coordinate Zn(2+).

Belongs to the purine nucleoside phosphorylase YfiH/LACC1 family. As to quaternary structure, homodimer. Cu(2+) serves as cofactor. Requires Zn(2+) as cofactor.

It carries out the reaction adenosine + phosphate = alpha-D-ribose 1-phosphate + adenine. It catalyses the reaction S-methyl-5'-thioadenosine + phosphate = 5-(methylsulfanyl)-alpha-D-ribose 1-phosphate + adenine. The enzyme catalyses inosine + phosphate = alpha-D-ribose 1-phosphate + hypoxanthine. The catalysed reaction is adenosine + H2O + H(+) = inosine + NH4(+). Purine nucleoside enzyme that catalyzes the phosphorolysis of adenosine and inosine nucleosides, yielding D-ribose 1-phosphate and the respective free bases, adenine and hypoxanthine. Also catalyzes the phosphorolysis of S-methyl-5'-thioadenosine into adenine and S-methyl-5-thio-alpha-D-ribose 1-phosphate. Also has adenosine deaminase activity. The sequence is that of Purine nucleoside phosphorylase SAV1187 from Staphylococcus aureus (strain Mu50 / ATCC 700699).